The primary structure comprises 185 residues: Ribosome maturation factor RimP (185 aa).

The disordered stretch occupies residues 162–185 (VRLERAADGAPERGGDRGDTEESR).

This sequence belongs to the RimP family.

It is found in the cytoplasm. Functionally, required for maturation of 30S ribosomal subunits. This Saccharopolyspora erythraea (strain ATCC 11635 / DSM 40517 / JCM 4748 / NBRC 13426 / NCIMB 8594 / NRRL 2338) protein is Ribosome maturation factor RimP.